We begin with the raw amino-acid sequence, 550 residues long: Probable acyl-activating enzyme 9 (550 aa).

The protein belongs to the ATP-dependent AMP-binding enzyme family. In terms of tissue distribution, expressed in leaves, flowers and developing seeds.

May act as an acid--thiol ligase that activates carboxylic acids by forming acyl-CoAs. The polypeptide is Probable acyl-activating enzyme 9 (AEE9) (Arabidopsis thaliana (Mouse-ear cress)).